Consider the following 304-residue polypeptide: Aspartate carbamoyltransferase catalytic subunit (304 aa).

The carbamoyl phosphate site is built by Arg-49 and Thr-50. Residue Lys-77 participates in L-aspartate binding. Carbamoyl phosphate-binding residues include Arg-99, His-127, and Gln-130. Residues Arg-160 and Arg-211 each coordinate L-aspartate. 2 residues coordinate carbamoyl phosphate: Ala-252 and Pro-253.

Belongs to the aspartate/ornithine carbamoyltransferase superfamily. ATCase family. In terms of assembly, heterododecamer (2C3:3R2) of six catalytic PyrB chains organized as two trimers (C3), and six regulatory PyrI chains organized as three dimers (R2).

The enzyme catalyses carbamoyl phosphate + L-aspartate = N-carbamoyl-L-aspartate + phosphate + H(+). Its pathway is pyrimidine metabolism; UMP biosynthesis via de novo pathway; (S)-dihydroorotate from bicarbonate: step 2/3. Functionally, catalyzes the condensation of carbamoyl phosphate and aspartate to form carbamoyl aspartate and inorganic phosphate, the committed step in the de novo pyrimidine nucleotide biosynthesis pathway. The protein is Aspartate carbamoyltransferase catalytic subunit of Bacillus cytotoxicus (strain DSM 22905 / CIP 110041 / 391-98 / NVH 391-98).